Reading from the N-terminus, the 110-residue chain is LLSFLGEAARGTWDMIRAYNDMREANYIGADKYFHARGNYDAAKRGPGGAWAAKVISDARENFQRFTDRFSFGGSGRGAEDSRADQAANEWGRSGKDPNHFRPHGLPDKY.

The interval 73 to 110 (GGSGRGAEDSRADQAANEWGRSGKDPNHFRPHGLPDKY) is disordered. Residues 93–110 (RSGKDPNHFRPHGLPDKY) are compositionally biased toward basic and acidic residues.

Belongs to the SAA family. In terms of processing, this protein is the precursor of amyloid protein A, which is formed by the removal of residues from the C-terminal end. Expressed by the liver; secreted in plasma.

Major acute phase reactant. Apolipoprotein of the HDL complex. The protein is Serum amyloid A protein (SAA1) of Equus caballus (Horse).